The sequence spans 258 residues: Acetylglutamate kinase (258 aa).

Residues 44-45, arginine 66, and asparagine 158 each bind substrate; that span reads GG. ATP contacts are provided by residues 181–186 and 209–211; these read DVSGIL and IIT.

Belongs to the acetylglutamate kinase family. ArgB subfamily. Homodimer.

It localises to the cytoplasm. It carries out the reaction N-acetyl-L-glutamate + ATP = N-acetyl-L-glutamyl 5-phosphate + ADP. Its pathway is amino-acid biosynthesis; L-arginine biosynthesis; N(2)-acetyl-L-ornithine from L-glutamate: step 2/4. In terms of biological role, catalyzes the ATP-dependent phosphorylation of N-acetyl-L-glutamate. This is Acetylglutamate kinase from Shigella dysenteriae serotype 1 (strain Sd197).